The chain runs to 304 residues: Aspartate carbamoyltransferase catalytic subunit (304 aa).

2 residues coordinate carbamoyl phosphate: arginine 54 and threonine 55. Lysine 83 contacts L-aspartate. 3 residues coordinate carbamoyl phosphate: arginine 104, histidine 132, and glutamine 135. L-aspartate is bound by residues arginine 165 and arginine 226. Positions 265 and 266 each coordinate carbamoyl phosphate.

The protein belongs to the aspartate/ornithine carbamoyltransferase superfamily. ATCase family. In terms of assembly, heterooligomer of catalytic and regulatory chains.

The enzyme catalyses carbamoyl phosphate + L-aspartate = N-carbamoyl-L-aspartate + phosphate + H(+). It participates in pyrimidine metabolism; UMP biosynthesis via de novo pathway; (S)-dihydroorotate from bicarbonate: step 2/3. Functionally, catalyzes the condensation of carbamoyl phosphate and aspartate to form carbamoyl aspartate and inorganic phosphate, the committed step in the de novo pyrimidine nucleotide biosynthesis pathway. In Pyrobaculum neutrophilum (strain DSM 2338 / JCM 9278 / NBRC 100436 / V24Sta) (Thermoproteus neutrophilus), this protein is Aspartate carbamoyltransferase catalytic subunit.